A 96-amino-acid chain; its full sequence is Large ribosomal subunit protein uL23 (96 aa).

The protein belongs to the universal ribosomal protein uL23 family. As to quaternary structure, part of the 50S ribosomal subunit. Contacts protein L29, and trigger factor when it is bound to the ribosome.

Its function is as follows. One of the early assembly proteins it binds 23S rRNA. One of the proteins that surrounds the polypeptide exit tunnel on the outside of the ribosome. Forms the main docking site for trigger factor binding to the ribosome. The chain is Large ribosomal subunit protein uL23 from Nitratidesulfovibrio vulgaris (strain ATCC 29579 / DSM 644 / CCUG 34227 / NCIMB 8303 / VKM B-1760 / Hildenborough) (Desulfovibrio vulgaris).